Reading from the N-terminus, the 564-residue chain is Eukaryotic translation initiation factor 3 subunit L (564 aa).

The 207-residue stretch at 331-537 (DAIRVFANIL…IHIADTKVAR (207 aa)) folds into the PCI domain.

This sequence belongs to the eIF-3 subunit L family. In terms of assembly, component of the eukaryotic translation initiation factor 3 (eIF-3) complex, which is composed of 13 subunits: EIF3A, EIF3B, EIF3C, EIF3D, EIF3E, EIF3F, EIF3G, EIF3H, EIF3I, EIF3J, EIF3K, EIF3L and EIF3M.

The protein localises to the cytoplasm. Its function is as follows. Component of the eukaryotic translation initiation factor 3 (eIF-3) complex, which is involved in protein synthesis of a specialized repertoire of mRNAs and, together with other initiation factors, stimulates binding of mRNA and methionyl-tRNAi to the 40S ribosome. The eIF-3 complex specifically targets and initiates translation of a subset of mRNAs involved in cell proliferation. This Gallus gallus (Chicken) protein is Eukaryotic translation initiation factor 3 subunit L.